The following is a 115-amino-acid chain: NADH-ubiquinone oxidoreductase chain 3 (115 aa).

Helical transmembrane passes span 4 to 24 (LVTM…AFWL), 55 to 75 (FFLV…LLPM), and 86 to 106 (TMTL…AYEW).

This sequence belongs to the complex I subunit 3 family. Core subunit of respiratory chain NADH dehydrogenase (Complex I) which is composed of 45 different subunits. Interacts with TMEM186. Interacts with TMEM242.

It is found in the mitochondrion inner membrane. The catalysed reaction is a ubiquinone + NADH + 5 H(+)(in) = a ubiquinol + NAD(+) + 4 H(+)(out). Core subunit of the mitochondrial membrane respiratory chain NADH dehydrogenase (Complex I) which catalyzes electron transfer from NADH through the respiratory chain, using ubiquinone as an electron acceptor. Essential for the catalytic activity of complex I. This chain is NADH-ubiquinone oxidoreductase chain 3, found in Nelsonia neotomodon (Diminutive woodrat).